The primary structure comprises 261 residues: Tryptophan synthase alpha chain (261 aa).

Active-site proton acceptor residues include Glu-47 and Asp-58.

Belongs to the TrpA family. As to quaternary structure, tetramer of two alpha and two beta chains.

It carries out the reaction (1S,2R)-1-C-(indol-3-yl)glycerol 3-phosphate + L-serine = D-glyceraldehyde 3-phosphate + L-tryptophan + H2O. Its pathway is amino-acid biosynthesis; L-tryptophan biosynthesis; L-tryptophan from chorismate: step 5/5. The alpha subunit is responsible for the aldol cleavage of indoleglycerol phosphate to indole and glyceraldehyde 3-phosphate. The chain is Tryptophan synthase alpha chain from Neisseria meningitidis serogroup A / serotype 4A (strain DSM 15465 / Z2491).